Reading from the N-terminus, the 200-residue chain is GTP-binding protein rho2 (200 aa).

15–22 provides a ligand contact to GTP; that stretch reads GDGACGKT. An Effector region motif is present at residues 37 to 45; that stretch reads YVPTVFENY. GTP contacts are provided by residues 62 to 66 and 120 to 123; these read DTAGQ and MKAD. Residue Cys197 is modified to Cysteine methyl ester. The S-geranylgeranyl cysteine moiety is linked to residue Cys197. The propeptide at 198-200 is removed in mature form; it reads IIS.

The protein belongs to the small GTPase superfamily. Rho family. Interacts with pck2.

It localises to the cell membrane. Its function is as follows. Involved in cell morphogenesis, the maintenance of growth direction, control of polarity and of cell wall integrity. Regulates the synthesis of alpha-D-glucan through activation of pck2. This is GTP-binding protein rho2 (rho2) from Schizosaccharomyces pombe (strain 972 / ATCC 24843) (Fission yeast).